The chain runs to 863 residues: Glycerol-3-phosphate acyltransferase (863 aa).

Positions 1–29 (MPKKNSPLLPKETTTTQSSVDTSGSSNLT) are disordered. The span at 12 to 29 (ETTTTQSSVDTSGSSNLT) shows a compositional bias: polar residues. The HXXXXD motif motif lies at 343 to 348 (SHRSHM).

This sequence belongs to the GPAT/DAPAT family.

It is found in the cell inner membrane. It catalyses the reaction sn-glycerol 3-phosphate + an acyl-CoA = a 1-acyl-sn-glycero-3-phosphate + CoA. Its pathway is phospholipid metabolism; CDP-diacylglycerol biosynthesis; CDP-diacylglycerol from sn-glycerol 3-phosphate: step 1/3. In Xylella fastidiosa (strain M23), this protein is Glycerol-3-phosphate acyltransferase.